Reading from the N-terminus, the 436-residue chain is Glutamyl-tRNA reductase (436 aa).

Substrate contacts are provided by residues 49-52 (TCNR), S109, 114-116 (EPQ), and Q120. C50 serves as the catalytic Nucleophile. 189–194 (GAGEMC) is an NADP(+) binding site.

It belongs to the glutamyl-tRNA reductase family. As to quaternary structure, homodimer.

The enzyme catalyses (S)-4-amino-5-oxopentanoate + tRNA(Glu) + NADP(+) = L-glutamyl-tRNA(Glu) + NADPH + H(+). Its pathway is porphyrin-containing compound metabolism; protoporphyrin-IX biosynthesis; 5-aminolevulinate from L-glutamyl-tRNA(Glu): step 1/2. Its function is as follows. Catalyzes the NADPH-dependent reduction of glutamyl-tRNA(Glu) to glutamate 1-semialdehyde (GSA). This Pelobacter propionicus (strain DSM 2379 / NBRC 103807 / OttBd1) protein is Glutamyl-tRNA reductase.